A 385-amino-acid polypeptide reads, in one-letter code: NADH-quinone oxidoreductase subunit H (385 aa).

The next 8 helical transmembrane spans lie at 14 to 34, 80 to 100, 130 to 150, 172 to 192, 219 to 239, 280 to 300, 325 to 345, and 365 to 385; these read GLKL…LVWL, FLYY…FSAI, IGVG…TLLM, ISYE…YGTF, LPNW…SAAF, MMIA…IPYV, LIHF…FIWV, and MLPW…IASL.

It belongs to the complex I subunit 1 family. As to quaternary structure, NDH-1 is composed of 14 different subunits. Subunits NuoA, H, J, K, L, M, N constitute the membrane sector of the complex.

It localises to the cell inner membrane. The catalysed reaction is a quinone + NADH + 5 H(+)(in) = a quinol + NAD(+) + 4 H(+)(out). In terms of biological role, NDH-1 shuttles electrons from NADH, via FMN and iron-sulfur (Fe-S) centers, to quinones in the respiratory chain. The immediate electron acceptor for the enzyme in this species is believed to be ubiquinone. Couples the redox reaction to proton translocation (for every two electrons transferred, four hydrogen ions are translocated across the cytoplasmic membrane), and thus conserves the redox energy in a proton gradient. This subunit may bind ubiquinone. This is NADH-quinone oxidoreductase subunit H from Bdellovibrio bacteriovorus (strain ATCC 15356 / DSM 50701 / NCIMB 9529 / HD100).